The primary structure comprises 341 residues: 4-hydroxy-2-oxovalerate aldolase 2 (341 aa).

Residues 8-260 (VTVHDMTLRD…ETGVDVAKIT (253 aa)) enclose the Pyruvate carboxyltransferase domain. Substrate is bound at residue 16–17 (RD). Aspartate 17 contacts Mn(2+). Histidine 20 acts as the Proton acceptor in catalysis. Substrate is bound by residues serine 170 and histidine 199. Histidine 199 and histidine 201 together coordinate Mn(2+). Tyrosine 290 lines the substrate pocket.

Belongs to the 4-hydroxy-2-oxovalerate aldolase family.

It carries out the reaction (S)-4-hydroxy-2-oxopentanoate = acetaldehyde + pyruvate. The protein is 4-hydroxy-2-oxovalerate aldolase 2 of Dechloromonas aromatica (strain RCB).